A 482-amino-acid chain; its full sequence is Glutamyl-tRNA(Gln) amidotransferase subunit A (482 aa).

Residues Lys75 and Ser150 each act as charge relay system in the active site. Ser174 acts as the Acyl-ester intermediate in catalysis.

It belongs to the amidase family. GatA subfamily. As to quaternary structure, heterotrimer of A, B and C subunits.

The catalysed reaction is L-glutamyl-tRNA(Gln) + L-glutamine + ATP + H2O = L-glutaminyl-tRNA(Gln) + L-glutamate + ADP + phosphate + H(+). Its function is as follows. Allows the formation of correctly charged Gln-tRNA(Gln) through the transamidation of misacylated Glu-tRNA(Gln) in organisms which lack glutaminyl-tRNA synthetase. The reaction takes place in the presence of glutamine and ATP through an activated gamma-phospho-Glu-tRNA(Gln). The polypeptide is Glutamyl-tRNA(Gln) amidotransferase subunit A (Cyanothece sp. (strain PCC 7425 / ATCC 29141)).